Reading from the N-terminus, the 845-residue chain is Beta-glucosidase (845 aa).

A glycan (N-linked (GlcNAc...) asparagine) is linked at Asn66. Residue Asp225 is part of the active site. N-linked (GlcNAc...) asparagine glycans are attached at residues Asn304, Asn438, and Asn621. The region spanning Ala408–Ala568 is the PA14 domain.

It belongs to the glycosyl hydrolase 3 family. As to quaternary structure, homotetramer.

It carries out the reaction Hydrolysis of terminal, non-reducing beta-D-glucosyl residues with release of beta-D-glucose.. The protein operates within glycan metabolism; cellulose degradation. This Kluyveromyces marxianus (Yeast) protein is Beta-glucosidase.